Here is a 423-residue protein sequence, read N- to C-terminus: COP9 signalosome complex subunit 3 (423 aa).

The 169-residue stretch at 197–365 (NFERALYFYE…GMVCFHDNPE (169 aa)) folds into the PCI domain. A disordered region spans residues 403–423 (FVQKSMGSQDDDSGSKPSSYS).

The protein belongs to the CSN3 family. In terms of assembly, component of the CSN complex, probably composed of cops1, cops2, cops3, cops4, cops5, cops6, cops7, cops8 and cops9.

The protein resides in the cytoplasm. It localises to the nucleus. Its function is as follows. Component of the COP9 signalosome complex (CSN), a complex involved in various cellular and developmental processes. The CSN complex is an essential regulator of the ubiquitin (Ubl) conjugation pathway by mediating the deneddylation of the cullin subunits of E3 ligase complexes, leading to modify the Ubl ligase activity. The chain is COP9 signalosome complex subunit 3 (cops3) from Xenopus tropicalis (Western clawed frog).